The sequence spans 505 residues: Sucrose porin (505 aa).

Positions 1–22 (MYRKSTLAMLIALLTSAASAHA) are cleaved as a signal peptide. Residues 44–87 (ENRAQTAENRAGAAEKKVQQLTAQQQKNQNSTQEVAQRTARLEK) form a disordered region. Positions 62–72 (QQLTAQQQKNQ) are enriched in low complexity.

This sequence belongs to the porin LamB (TC 1.B.3) family. As to quaternary structure, homotrimer.

The protein resides in the cell outer membrane. Porin for sucrose uptake. The sequence is that of Sucrose porin (scrY) from Salmonella typhimurium.